The primary structure comprises 292 residues: Shikimate dehydrogenase (NADP(+)) (292 aa).

Residues S25 to S27 and T72 each bind shikimate. The Proton acceptor role is filled by K76. The shikimate site is built by N97 and D113. NADP(+) contacts are provided by residues G137–A141, N161–K166, and M230. Y232 is a shikimate binding site. Position 254 (G254) interacts with NADP(+).

This sequence belongs to the shikimate dehydrogenase family. In terms of assembly, homodimer.

The catalysed reaction is shikimate + NADP(+) = 3-dehydroshikimate + NADPH + H(+). It functions in the pathway metabolic intermediate biosynthesis; chorismate biosynthesis; chorismate from D-erythrose 4-phosphate and phosphoenolpyruvate: step 4/7. Functionally, involved in the biosynthesis of the chorismate, which leads to the biosynthesis of aromatic amino acids. Catalyzes the reversible NADPH linked reduction of 3-dehydroshikimate (DHSA) to yield shikimate (SA). The chain is Shikimate dehydrogenase (NADP(+)) from Shewanella sp. (strain MR-4).